Here is a 736-residue protein sequence, read N- to C-terminus: Acyl-coenzyme A oxidase (736 aa).

The protein belongs to the acyl-CoA oxidase family. FAD serves as cofactor.

It localises to the peroxisome. The catalysed reaction is a 2,3-saturated acyl-CoA + O2 = a (2E)-enoyl-CoA + H2O2. It functions in the pathway lipid metabolism; peroxisomal fatty acid beta-oxidation. The sequence is that of Acyl-coenzyme A oxidase (POX1) from Kluyveromyces lactis (strain ATCC 8585 / CBS 2359 / DSM 70799 / NBRC 1267 / NRRL Y-1140 / WM37) (Yeast).